A 396-amino-acid chain; its full sequence is MAKGKFERTKPHVNVGTIGHVDHGKTTLTAAITTVLSNKFGGEARGYDQIDAAPEEKARGITINTSHVEYETETRHYAHVDCPGHADYVKNMITGAAQMDGAILVVSAADGPMPQTREHILLSRQVGVPYIIVFLNKADMVDDAELLELVEMEVRELLSKYDFPGDDTPIVKGSAKLALEGDKGELGEQAILSLAQALDTYIPTPERAVDGAFLMPVEDVFSISGRGTVVTGRIERGVVKVGEEIEIVGIKPTVKTTCTGVEMFRKLLDQGQAGDNVGILLRGTKREDVERGQVLAKPGSINPHTDFTAEVYILSKEEGGRHTPFFNGYRPQFYFRTTDVTGTIDLPADKEMVLPGDNVSMTVKLLAPIAMEEGLRFAIREGGRTVGAGVVAKIIK.

In terms of domain architecture, tr-type G spans 10 to 206 (KPHVNVGTIG…ALDTYIPTPE (197 aa)). Positions 19-26 (GHVDHGKT) are G1. Residue 19–26 (GHVDHGKT) participates in GTP binding. Residue threonine 26 participates in Mg(2+) binding. The segment at 60–64 (GITIN) is G2. The G3 stretch occupies residues 81–84 (DCPG). Residues 81–85 (DCPGH) and 136–139 (NKAD) contribute to the GTP site. Residues 136 to 139 (NKAD) form a G4 region. Residues 174 to 176 (SAK) form a G5 region.

This sequence belongs to the TRAFAC class translation factor GTPase superfamily. Classic translation factor GTPase family. EF-Tu/EF-1A subfamily. In terms of assembly, monomer.

It localises to the cytoplasm. It catalyses the reaction GTP + H2O = GDP + phosphate + H(+). Its function is as follows. GTP hydrolase that promotes the GTP-dependent binding of aminoacyl-tRNA to the A-site of ribosomes during protein biosynthesis. The sequence is that of Elongation factor Tu from Bordetella bronchiseptica (strain ATCC BAA-588 / NCTC 13252 / RB50) (Alcaligenes bronchisepticus).